We begin with the raw amino-acid sequence, 259 residues long: MLRKVFAVVSVLLVVSAAKVTKLVLDDNYVNRVVGGEVAKNGSAPYQVSLQVPGWGHNCGGSLLNDRWVLTAAHCLVGHAPGDLMVLVGTNSLKEGGELLKVDKLLYHSRYNLPRFHNDIGLVRLEQPVRFSELVQSVEYSEKAVPANATVRLTGWGHTSANGPSPTLLQSLNVVTLSNEDCNKKGGDPGYTDVGHLCTLTKTGEGACNGDSGGPLVYEGKLVGVVNFGVPCALGYPDGFARVSYYHDWVRTTMANNSK.

Residues 1-17 (MLRKVFAVVSVLLVVSA) form the signal peptide. Residues 18-32 (AKVTKLVLDDNYVNR) constitute a propeptide, activation peptide. One can recognise a Peptidase S1 domain in the interval 33 to 255 (VVGGEVAKNG…YHDWVRTTMA (223 aa)). Cysteines 59 and 75 form a disulfide. Active-site charge relay system residues include His-74 and Asp-119. 2 disulfides stabilise this stretch: Cys-182/Cys-198 and Cys-208/Cys-232. Ser-212 acts as the Charge relay system in catalysis.

This sequence belongs to the peptidase S1 family. As to expression, after blood feeding, expression is induced in the midgut epithelium, followed by secretion into the midgut lumen.

The protein localises to the secreted. It carries out the reaction Preferential cleavage: Tyr-|-Xaa, Trp-|-Xaa, Phe-|-Xaa, Leu-|-Xaa.. This Anopheles gambiae (African malaria mosquito) protein is Chymotrypsin-1 (CHYM1).